The primary structure comprises 424 residues: C4-dicarboxylate transport protein (424 aa).

Transmembrane regions (helical) follow at residues 4-24, 44-64, 76-96, 142-162, 184-206, 222-242, 326-346, and 352-372; these read SLFK…VLLG, LIKM…IAGM, VALI…LVVV, IGAF…LFGF, VFFG…AMAF, LIVC…GLIA, IWHQ…AAGV, and IVLA…LALI.

This sequence belongs to the dicarboxylate/amino acid:cation symporter (DAACS) (TC 2.A.23) family.

The protein localises to the cell inner membrane. Its function is as follows. Responsible for the transport of dicarboxylates such as succinate, fumarate, and malate from the periplasm across the membrane. The protein is C4-dicarboxylate transport protein of Erwinia tasmaniensis (strain DSM 17950 / CFBP 7177 / CIP 109463 / NCPPB 4357 / Et1/99).